The following is a 485-amino-acid chain: Rop guanine nucleotide exchange factor 2 (485 aa).

The tract at residues 1–36 is disordered; that stretch reads MENLPNHEENDDVGYHQSPGPIDPNDHSASETPVYS. A PRONE domain is found at 107–485; sequence LAVQEISEPE…YVDKTMRGEE (379 aa).

Interacts with ARC10/ROP11. Expressed in the vascular tissues of roots, leaves, sepals, petals and siliques.

Functionally, guanine-nucleotide exchange factor (GEF) that acts as an activator of Rop (Rho of plants) GTPases by promoting the exchange of GDP for GTP. The protein is Rop guanine nucleotide exchange factor 2 (ROPGEF2) of Arabidopsis thaliana (Mouse-ear cress).